The following is a 154-amino-acid chain: MAARLCCQLDPARDVLCLRPVGAESRGRPLPGPLGAIPPASPPVVPTDHGAHLSLRGLPVCAFSSAGPCALRFTSARRMETTVNAPGNLPKVLHKRTLGLSVMSTTDLEAYFKDCVFTEWEELGEEVRLKVFVLGGCRHKLVCPPAPCNFFTSA.

Residues 68 to 117 are mitochondrial targeting sequence; that stretch reads PCALRFTSARRMETTVNAPGNLPKVLHKRTLGLSVMSTTDLEAYFKDCVF.

Belongs to the orthohepadnavirus protein X family. In terms of assembly, may form homodimer. May interact with host CEBPA, CFLAR, CREB1, DDB1, E4F1, HBXIP, HSPD1/HSP60, NFKBIA, POLR2E and SMAD4. Interacts with host SMC5-SMC6 complex and induces its degradation. Interacts with host TRPC4AP; leading to prevent ubiquitination of TRPC4AP. Interacts with host PLSCR1; this interaction promotes ubiquitination and degradation of HBx and impairs HBx-mediated cell proliferation. Post-translationally, a fraction may be phosphorylated in insect cells and HepG2 cells, a human hepatoblastoma cell line. Phosphorylated in vitro by host protein kinase C or mitogen-activated protein kinase. N-acetylated in insect cells.

The protein localises to the host cytoplasm. It localises to the host nucleus. The protein resides in the host mitochondrion. Functionally, multifunctional protein that plays a role in silencing host antiviral defenses and promoting viral transcription. Does not seem to be essential for HBV infection. May be directly involved in development of cirrhosis and liver cancer (hepatocellular carcinoma). Most of cytosolic activities involve modulation of cytosolic calcium. The effect on apoptosis is controversial depending on the cell types in which the studies have been conducted. May induce apoptosis by localizing in mitochondria and causing loss of mitochondrial membrane potential. May also modulate apoptosis by binding host CFLAR, a key regulator of the death-inducing signaling complex (DISC). Promotes viral transcription by using the host E3 ubiquitin ligase DDB1 to target the SMC5-SMC6 complex to proteasomal degradation. This host complex would otherwise bind to viral episomal DNA, and prevents its transcription. Moderately stimulates transcription of many different viral and cellular transcription elements. Promoters and enhancers stimulated by HBx contain DNA binding sites for NF-kappa-B, AP-1, AP-2, c-EBP, ATF/CREB, or the calcium-activated factor NF-AT. This Hepatitis B virus genotype B2 (isolate Vietnam/16091/1992) (HBV-B) protein is Protein X.